The chain runs to 275 residues: Taurine transport system permease protein TauC (275 aa).

Helical transmembrane passes span 20–42, 87–107, 124–144, 146–166, 186–206, 209–229, and 236–256; these read LSRQVTLSIGTLAVLLTVWWTVA, IMLALFAAVLFGIPVGIAMGL, PVPPLAYLPLMVIWFGIGETS, ILLIYLAIFAPVAMSALAGVK, VLWFVILPGALPEILTGLRIG, VGWSTLVAAELIAATRGLGFM, and FLATDVVLAGIAVIAIIAFLL. An ABC transmembrane type-1 domain is found at 80 to 264; the sequence is LAASLTRIML…LLELGLRALQ (185 aa).

It belongs to the binding-protein-dependent transport system permease family. CysTW subfamily.

The protein resides in the cell inner membrane. Part of a binding-protein-dependent transport system for taurine. Probably responsible for the translocation of the substrate across the membrane. This Escherichia coli (strain K12) protein is Taurine transport system permease protein TauC (tauC).